Here is a 504-residue protein sequence, read N- to C-terminus: Patatin-like phospholipase domain-containing protein 2 (504 aa).

Over 1-8 (MFPREKTW) the chain is Cytoplasmic. The chain crosses the membrane as a helical span at residues 9 to 29 (NISFAGCGFLGVYYVGVASCL). In terms of domain architecture, PNPLA spans 10 to 179 (ISFAGCGFLG…SDNLPLYELK (170 aa)). A GXGXXG motif is present at residues 14–19 (GCGFLG). Topologically, residues 30–42 (REHAPFLVANATH) are extracellular. N-linked (GlcNAc...) asparagine glycosylation occurs at Asn-39. A helical transmembrane segment spans residues 43 to 63 (IYGASAGALTATALVTGVCLG). The GXSXG motif lies at 45 to 49 (GASAG). Ser-47 functions as the Nucleophile in the catalytic mechanism. At 64 to 137 (EAGAKFIEVS…IISHFNSKDE (74 aa)) the chain is on the cytoplasmic side. Lys-92 participates in a covalent cross-link: Glycyl lysine isopeptide (Lys-Gly) (interchain with G-Cter in ubiquitin). A helical membrane pass occupies residues 138-158 (LIQANVCSGFIPVYCGLIPPS). The Extracellular portion of the chain corresponds to 159 to 329 (LQGVRYVDGG…TTLSNMLPVR (171 aa)). The active-site Proton acceptor is the Asp-166. Residues 166–168 (DGG) carry the DGA/G motif. A helical transmembrane segment spans residues 330 to 350 (LATAMMVPYTLPLESALSFTI). Over 351–504 (RLLEWLPDVP…ARPVIGALGL (154 aa)) the chain is Cytoplasmic. Position 372 is a phosphoserine; in vitro (Ser-372). A Phosphoserine; by PKA and FAM20C modification is found at Ser-404. Ser-428 carries the post-translational modification Phosphoserine. Residues 463–492 (APADPAPAPADPASPQHQLAGPAPLLSTPA) are disordered.

In terms of assembly, interacts with ABHD5; this association stimulates PNPLA2 triglyceride hydrolase activity. Interacts with SERPINF1; this interaction stimulates the phospholipase A2 activity of PNPLA2. Despite a colocalization in lipid droplets, it probably does not interact with PLIN. Interacts with PLIN5; prevents interaction with ABHD5. Interacts with FAF2. In terms of processing, phosphorylation at Ser-404 by PKA is increased during fasting and moderate intensity exercise, and moderately increases lipolytic activity. Phosphorylation at Ser-404 is increased upon beta-adrenergic stimulation. Post-translationally, ubiquitinated by PEX2 in response to reactive oxygen species (ROS), leading to its degradation. Ubiquitination is stimulated by LDAH. In terms of tissue distribution, highest expression in adipose tissue. Also detected in heart, skeletal muscle, and portions of the gastrointestinal tract. Detected in normal retina and retinoblastoma cells. Detected in retinal pigment epithelium and, at lower intensity, in the inner segments of photoreceptors and in the ganglion cell layer of the neural retina (at protein level).

The protein localises to the lipid droplet. It is found in the cell membrane. Its subcellular location is the cytoplasm. It catalyses the reaction a triacylglycerol + H2O = a diacylglycerol + a fatty acid + H(+). The catalysed reaction is a triacylglycerol + H2O = a 1,2-diacylglycerol + a fatty acid + H(+). The enzyme catalyses a triacylglycerol + H2O = a 1,3-diacylglycerol + a fatty acid + H(+). It carries out the reaction a triacyl-sn-glycerol + H2O = a 1,3-diacyl-sn-glycerol + a fatty acid + H(+). It catalyses the reaction a triacyl-sn-glycerol + H2O = a 2,3-diacyl-sn-glycerol + a fatty acid + H(+). The catalysed reaction is a 1-acylglycerol + a 1,3-diacylglycerol = a triacylglycerol + glycerol. The enzyme catalyses a 1-acylglycerol + a 1,2-diacylglycerol = a triacylglycerol + glycerol. It carries out the reaction 2 a 1-acylglycerol = a 1,2-diacylglycerol + glycerol. It catalyses the reaction a triacylglycerol + all-trans-retinol = an all-trans-retinyl ester + a diacylglycerol. The catalysed reaction is 1,2-di-(9Z-octadecenoyl)-glycerol + (9Z)-octadecenoate + H(+) = 1,2,3-tri-(9Z-octadecenoyl)-glycerol + H2O. The enzyme catalyses 1,2,3-tri-(9Z-octadecenoyl)-glycerol + H2O = 1,3-di-(9Z-octadecenoyl)-glycerol + (9Z)-octadecenoate + H(+). It carries out the reaction 1-(9Z-octadecenoyl)-glycerol + 1,3-di-(9Z-octadecenoyl)-glycerol = 1,2,3-tri-(9Z-octadecenoyl)-glycerol + glycerol. It catalyses the reaction 1-(9Z-octadecenoyl)-glycerol + 1,2-di-(9Z-octadecenoyl)-glycerol = 1,2,3-tri-(9Z-octadecenoyl)-glycerol + glycerol. The catalysed reaction is 2 1-(9Z-octadecenoyl)-glycerol = 1,2-di-(9Z-octadecenoyl)-glycerol + glycerol. The enzyme catalyses 1,2,3-tri-(9Z-octadecenoyl)-glycerol + all-trans-retinol = all-trans-retinyl 9Z-octadecenoate + di-(9Z)-octadecenoylglycerol. It carries out the reaction 1,2,3-tri-(9Z)-hexadecenoylglycerol + H2O = 1,3-di-(9Z)-hexadecenoylglycerol + (9Z)-hexadecenoate + H(+). It catalyses the reaction 1,2,3-tri-(9Z,12Z)-octadecadienoylglycerol + H2O = 1,3-di-(9Z,12Z)-octadecadienoylglycerol + (9Z,12Z)-octadecadienoate + H(+). The catalysed reaction is 1,2,3-tri-(9Z,12Z,15Z)-octadecatrienoylglycerol + H2O = 1,3-di-(9Z,12Z,15Z)-octadecatrienoylglycerol + (9Z,12Z,15Z)-octadecatrienoate + H(+). The enzyme catalyses 1,3-di-(9Z)-octadecenoyl-2-hexadecanoylglycerol + H2O = 1,3-di-(9Z-octadecenoyl)-glycerol + hexadecanoate + H(+). It carries out the reaction 1,2-di-(9Z)-octadecenoyl-3-hexadecanoyl-sn-glycerol + H2O = 1-(9Z)-octadecenoyl-3-hexadecanoyl-sn-glycerol + (9Z)-octadecenoate + H(+). It catalyses the reaction 1-hexadecanoyl-2,3-di-(9Z)-octadecenoyl-sn-glycerol + H2O = 1-hexadecanoyl-3-(9Z)-octadecenoyl-sn-glycerol + (9Z)-octadecenoate + H(+). The catalysed reaction is 1,2,3-tri-(9Z-octadecenoyl)-glycerol + H2O = 2,3-di-(9Z)-octadecenoyl-sn-glycerol + (9Z)-octadecenoate + H(+). The enzyme catalyses 1,2,3-tri-(9Z)-hexadecenoylglycerol + H2O = 2,3-di-(9Z)-hexadecenoyl-sn-glycerol + (9Z)-hexadecenoate + H(+). It carries out the reaction 1,2,3-tri-(9Z,12Z)-octadecadienoylglycerol + H2O = 2,3-di-(9Z,12Z)-octadecadienoyl-sn-glycerol + (9Z,12Z)-octadecadienoate + H(+). It catalyses the reaction 1,2,3-tri-(9Z,12Z,15Z)-octadecatrienoylglycerol + H2O = 2,3-di-(9Z,12Z,15Z)-octadecatrienoyl-sn-glycerol + (9Z,12Z,15Z)-octadecatrienoate + H(+). The catalysed reaction is 1,3-di-(9Z)-octadecenoyl-2-hexadecanoylglycerol + H2O = 2-hexadecanoyl-3-(9Z)-octadecenoyl-sn-glycerol + (9Z)-octadecenoate + H(+). The enzyme catalyses 1-hexadecanoyl-2,3-di-(9Z)-octadecenoyl-sn-glycerol + H2O = 2,3-di-(9Z)-octadecenoyl-sn-glycerol + hexadecanoate + H(+). It carries out the reaction 1,2-di-(9Z)-octadecenoyl-3-hexadecanoyl-sn-glycerol + H2O = 2-(9Z-octadecenoyl)-3-hexadecanoyl-sn-glycerol + (9Z)-octadecenoate + H(+). It catalyses the reaction a 1,2-diacyl-sn-glycero-3-phosphocholine + H2O = a 1-acyl-sn-glycero-3-phosphocholine + a fatty acid + H(+). The catalysed reaction is 1,2,3-tri-(9Z-octadecenoyl)-glycerol + 9-hydroxy-octadecanoate = 9-(9Z-octadecenoyloxy)-octadecanoate + 2,3-di-(9Z)-octadecenoyl-sn-glycerol. The enzyme catalyses 1-hexadecanoyl-2,3-di-(9Z)-octadecenoyl-sn-glycerol + 9-hydroxy-octadecanoate = 9-hexadecanoyloxy-octadecanoate + 2,3-di-(9Z)-octadecenoyl-sn-glycerol. It carries out the reaction 1,2,3-tri-(10Z)-heptadecenoylglycerol + 9-hydroxy-octadecanoate = 2,3-di-(10Z-heptadecenoyl)-sn-glycerol + 9-(10Z-heptadecenoyloxy)-octadecanoate. It catalyses the reaction 1,2,3-tri-(9Z,12Z)-octadecadienoylglycerol + 9-hydroxy-octadecanoate = 2,3-di-(9Z,12Z)-octadecadienoyl-sn-glycerol + 9-(9Z,12Z-octadecadienoyloxy)-octadecanoate. The catalysed reaction is 1,2,3-tri-(9Z)-hexadecenoylglycerol + 9-hydroxy-octadecanoate = 2,3-di-(9Z)-hexadecenoyl-sn-glycerol + 9-(9Z-hexadecenoyloxy)-octadecanoate. The enzyme catalyses 9-hydroxy-octadecanoate + 1,2-di-(9Z-octadecenoyl)-sn-glycerol = 9-(9Z-octadecenoyloxy)-octadecanoate + 2-(9Z-octadecenoyl)-glycerol. It carries out the reaction 1-hexadecanoyl-2,3-di-(9Z)-octadecenoyl-sn-glycerol + 9-hydroxy-octadecanoate = 1-hexadecanoyl-3-(9Z)-octadecenoyl-sn-glycerol + 9-(9Z-octadecenoyloxy)-octadecanoate. Its pathway is glycerolipid metabolism; triacylglycerol degradation. Its activity is regulated as follows. The triglyceride lipase activity is inhibited by BEL ((E)-6-(bromomethylene)-3-(1-naphthalenyl)-2H-tetrahydropyran-2-one), a suicide substrate inhibitor. No differences in the acylglycerol transacylase was detected in the presence or absence of ATP. In terms of biological role, catalyzes the initial step in triglyceride hydrolysis in adipocyte and non-adipocyte lipid droplets. Exhibits a strong preference for the hydrolysis of long-chain fatty acid esters at the sn-2 position of the glycerol backbone and acts coordinately with LIPE/HLS and DGAT2 within the lipolytic cascade. Also possesses acylglycerol transacylase and phospholipase A2 activities. Transfers fatty acid from triglyceride to retinol, hydrolyzes retinylesters, and generates 1,3-diacylglycerol from triglycerides. Regulates adiposome size and may be involved in the degradation of adiposomes. Catalyzes the formation of an ester bond between hydroxy fatty acids and fatty acids derived from triglycerides or diglycerides to generate fatty acid esters of hydroxy fatty acids (FAHFAs) in adipocytes. Acts antagonistically with LDAH in regulation of cellular lipid stores. Inhibits LDAH-stimulated lipid droplet fusion. May play an important role in energy homeostasis. May play a role in the response of the organism to starvation, enhancing hydrolysis of triglycerides and providing free fatty acids to other tissues to be oxidized in situations of energy depletion. This chain is Patatin-like phospholipase domain-containing protein 2, found in Homo sapiens (Human).